Reading from the N-terminus, the 282-residue chain is Pantothenate synthetase (282 aa).

30–37 is an ATP binding site; the sequence is MGYLHEGH. The active-site Proton donor is the His37. Gln61 serves as a coordination point for (R)-pantoate. Gln61 serves as a coordination point for beta-alanine. Position 147–150 (147–150) interacts with ATP; sequence GMKD. Gln153 is a (R)-pantoate binding site. Residues Val176 and 184–187 contribute to the ATP site; that span reads KSSR.

This sequence belongs to the pantothenate synthetase family. Homodimer.

It is found in the cytoplasm. The enzyme catalyses (R)-pantoate + beta-alanine + ATP = (R)-pantothenate + AMP + diphosphate + H(+). The protein operates within cofactor biosynthesis; (R)-pantothenate biosynthesis; (R)-pantothenate from (R)-pantoate and beta-alanine: step 1/1. In terms of biological role, catalyzes the condensation of pantoate with beta-alanine in an ATP-dependent reaction via a pantoyl-adenylate intermediate. The chain is Pantothenate synthetase from Geobacillus sp. (strain WCH70).